A 115-amino-acid chain; its full sequence is Large ribosomal subunit protein bL20 (115 aa).

Belongs to the bacterial ribosomal protein bL20 family.

Functionally, binds directly to 23S ribosomal RNA and is necessary for the in vitro assembly process of the 50S ribosomal subunit. It is not involved in the protein synthesizing functions of that subunit. The chain is Large ribosomal subunit protein bL20 from Salinibacter ruber (strain DSM 13855 / M31).